A 208-amino-acid polypeptide reads, in one-letter code: Protein IncB (208 aa).

In terms of biological role, this protein is thought to be cis acting and to contain the putative attachment site on the DNA for the cellular partition apparatus. This is Protein IncB (incB) from Escherichia coli.